A 478-amino-acid chain; its full sequence is Major facilitator superfamily domain-containing protein 12 (478 aa).

N-acetylmethionine is present on methionine 1. The Cytoplasmic segment spans residues methionine 1–alanine 26. A helical transmembrane segment spans residues valine 27–leucine 47. The Lumenal portion of the chain corresponds to histidine 48 to arginine 56. Residues glycine 57–glycine 77 traverse the membrane as a helical segment. Residues tyrosine 78–histidine 97 are Cytoplasmic-facing. Residues leucine 98–cysteine 118 traverse the membrane as a helical segment. The Lumenal portion of the chain corresponds to glycine 119–glutamate 124. Residues tryptophan 125–threonine 145 form a helical membrane-spanning segment. Residues glutamine 146 to alanine 168 are Cytoplasmic-facing. A helical membrane pass occupies residues leucine 169–leucine 189. Over arginine 190–arginine 216 the chain is Lumenal. A helical transmembrane segment spans residues threonine 217–threonine 237. The Cytoplasmic portion of the chain corresponds to arginine 238 to glutamine 277. The chain crosses the membrane as a helical span at residues valine 278–leucine 300. Over threonine 301–lysine 308 the chain is Lumenal. The helical transmembrane segment at lysine 309–methionine 329 threads the bilayer. Residues lysine 330–arginine 338 are Cytoplasmic-facing. The chain crosses the membrane as a helical span at residues asparagine 339–valine 359. Topologically, residues aspartate 360–glutamate 361 are lumenal. A helical membrane pass occupies residues leucine 362–valine 382. The Cytoplasmic portion of the chain corresponds to threonine 383–alanine 400. A helical membrane pass occupies residues phenylalanine 401–isoleucine 421. The Lumenal portion of the chain corresponds to glutamine 422–cysteine 436. The chain crosses the membrane as a helical span at residues valine 437–leucine 457. The Cytoplasmic segment spans residues serine 458–proline 478.

It belongs to the major facilitator superfamily.

It is found in the melanosome membrane. The protein localises to the lysosome membrane. The enzyme catalyses L-cysteine(in) = L-cysteine(out). Its function is as follows. Transporter that mediates the import of cysteine into melanosomes, thereby regulating skin/hair pigmentation. In melanosomes, cysteine import is required both for normal levels of cystine, the oxidized dimer of cysteine, and provide cysteine for the production of the cysteinyldopas used in pheomelanin synthesis, thereby regulating skin/hair pigmentation. Also catalyzes import of cysteine into lysosomes in non-pigmented cells, regulating lysosomal cystine and cysteine storage, which is essnetial for redox homeostasis. This chain is Major facilitator superfamily domain-containing protein 12, found in Equus caballus (Horse).